Reading from the N-terminus, the 376-residue chain is NIF3-like protein 1 (376 aa).

Lys108 carries the N6-acetyllysine modification. The segment at 243–376 (LLLHTGMGRL…ETDRDPLRVV (134 aa)) is mediates interaction with COPS2. The residue at position 254 (Thr254) is a Phosphothreonine. A Phosphoserine modification is found at Ser258.

Belongs to the GTP cyclohydrolase I type 2/NIF3 family. As to quaternary structure, homodimer. Interacts with COPS2. Interacts with THOC7. In terms of tissue distribution, ubiquitous. Detected in all tissues tested with higher expression in cerebellum, heart and kidney and to a lower level in cerebrum, lung, liver, spleen and muscle.

The protein localises to the cytoplasm. It localises to the nucleus. In terms of biological role, may function as a transcriptional corepressor through its interaction with COPS2, negatively regulating the expression of genes involved in neuronal differentiation. The chain is NIF3-like protein 1 from Mus musculus (Mouse).